Here is a 231-residue protein sequence, read N- to C-terminus: Maleylacetoacetate isomerase maiA (231 aa).

Residues 7 to 93 (PKVTLYTYFR…YLEEITPASS (87 aa)) enclose the GST N-terminal domain. In terms of domain architecture, GST C-terminal spans 102–224 (NPEARAVVRT…HWRTQPDTPE (123 aa)).

The protein belongs to the GST superfamily. Zeta family.

It catalyses the reaction 4-maleylacetoacetate = 4-fumarylacetoacetate. Its pathway is amino-acid degradation; L-phenylalanine degradation; acetoacetate and fumarate from L-phenylalanine: step 5/6. Its function is as follows. Maleylacetoacetate isomerase; part of the L-tyrosine degradation gene cluster that mediates the biosynthesis of the brownish pigment pyomelanin as an alternative melanin. The 4-hydroxyphenylpyruvate dioxygenase hppD catalyzes the conversion of 4-hydroxyphenylpyruvate to homogentisic acid (HGA). The protein hmgX is crucial for this conversion and thus, probably functions as an accessory factor to mediate specific activity of hppD. The homogentisate 1,2-dioxygenase hmgA is then involved in the cleavage of the aromatic ring of HGA and its conversion to 4-maleylacetoacetate. When hmgA activity is lowered by the cell wall integrity (CWI) signaling pathway, HGA accumulates and leads to the production of pyomelanin through benzoquinone acetic acid after oxidation and polymerization. On the opposite, in non-stress conditions, both hppD and hmgA activities are balanced and HGA is degraded into 4-maleylacetoacetate. 4-maleylacetoacetate is further converted to 4-fumarylacetoacetate by the maleylacetoacetate isomerase maiA, which is degraded into fumarate and acetoacetate by the fumarylacetoacetase fahA. This is Maleylacetoacetate isomerase maiA from Aspergillus fumigatus (strain ATCC MYA-4609 / CBS 101355 / FGSC A1100 / Af293) (Neosartorya fumigata).